Here is a 380-residue protein sequence, read N- to C-terminus: Glucose ABC transporter permease protein TsgB13 (380 aa).

10 helical membrane passes run 20–40 (GTPVLTVLAALAVGGVALVAL), 59–81 (QFGLTEVLVRAVPLILAGLAVYL), 94–114 (GQLLLGALAGTWVAVNVSLPA), 115–135 (VALLPLMFLAACVAGAFWAGI), 148–166 (IITSLLLTFVAQELQSYLL), 202–222 (IPLFADVHAGLLVAVAAVVAT), 255–275 (VYLFVFLLGGAFAALGGIAEI), 282–301 (FRAAFAPGYGFTAIPIALLG), 305–325 (AVKVTLAGLFFAVLFVGGSSV), and 328–348 (AFGVPAALVEIIQALVILFLI).

The protein belongs to the binding-protein-dependent transport system permease family. In terms of assembly, the complex is composed of two ATP-binding proteins (TsgD13), two transmembrane proteins (TsgB13 and TsgC13) and a solute-binding protein (TsgA13).

The protein resides in the cell membrane. Part of an ABC transporter complex involved in glucose import. Responsible for the translocation of the substrate across the membrane. In Haloferax volcanii (strain ATCC 29605 / DSM 3757 / JCM 8879 / NBRC 14742 / NCIMB 2012 / VKM B-1768 / DS2) (Halobacterium volcanii), this protein is Glucose ABC transporter permease protein TsgB13 (tsgB13).